Consider the following 694-residue polypeptide: Nucleolin (694 aa).

The segment at 1 to 277 (MVKLAKTPKN…EAKKKKTETP (277 aa)) is disordered. Residues 26-40 (ESEEEESSDLEESSG) show a composition bias toward acidic residues. Over residues 46–108 (PPKKQQKAAV…AVVGKGAKNG (63 aa)) the composition is skewed to low complexity. Repeat copies occupy residues 55 to 61 (VTPAKKA), 62 to 68 (ATPAKKA), 69 to 75 (ATPAKKA), 76 to 82 (VTPAKKA), and 84 to 90 (ATPAKKA). The segment at 55–90 (VTPAKKAATPAKKAATPAKKAVTPAKKAVATPAKKA) is 5 X 7 AA tandem repeats of X-T-P-X-K-K-X. Residues S116 and S136 each carry the phosphoserine modification. Acidic residues predominate over residues 116 to 142 (SEEEDEDDEDDEEDEDEEEESDEEEEP). A compositionally biased stretch (low complexity) spans 143–168 (AVPVKPAAKKSAAAVPAKKPAVVPAK). S171 carries the post-translational modification Phosphoserine. The span at 171 to 194 (SEEEEEEDDEEEDEEDDESEDEAM) shows a compositional bias: acidic residues. Low complexity predominate over residues 196 to 213 (TTPAPVKKPTPAKATPAK). A compositionally biased stretch (acidic residues) spans 218–246 (SEDEEDEEDEDEDEEDEDDEEEDEEESED). RRM domains are found at residues 281-357 (FSLF…KAKS), 371-445 (RTLF…YTGE), 461-535 (KTLI…FSSP), and 553-628 (KTLF…FAKP). The disordered stretch occupies residues 631–694 (EFQRGGGFGG…KPQGKKIKFE (64 aa)). A compositionally biased stretch (gly residues) spans 633 to 680 (QRGGGFGGGFGGRGGRGGRGGGRGGFGGRGGGRGFGGRGGGFRGGRGG). Residues 681-694 (GGDHKPQGKKIKFE) are compositionally biased toward basic and acidic residues.

Post-translationally, highly phosphorylated during mitosis.

Its subcellular location is the nucleus. It localises to the nucleolus. In terms of biological role, nucleolin is the major nucleolar protein of growing eukaryotic cells. It is found associated with intranucleolar chromatin and pre-ribosomal particles. It induces chromatin decondensation by binding to histone H1. It is thought to play a role in pre-rRNA transcription and ribosome assembly. The protein is Nucleolin (NCL) of Gallus gallus (Chicken).